The sequence spans 163 residues: Nucleotide-binding protein Bcer98_0876 (163 aa).

This sequence belongs to the YajQ family.

In terms of biological role, nucleotide-binding protein. This Bacillus cytotoxicus (strain DSM 22905 / CIP 110041 / 391-98 / NVH 391-98) protein is Nucleotide-binding protein Bcer98_0876.